The chain runs to 74 residues: Small ribosomal subunit protein eS17 (74 aa).

The protein belongs to the eukaryotic ribosomal protein eS17 family.

This chain is Small ribosomal subunit protein eS17, found in Ignicoccus hospitalis (strain KIN4/I / DSM 18386 / JCM 14125).